Here is a 352-residue protein sequence, read N- to C-terminus: Uroporphyrinogen decarboxylase (352 aa).

Substrate is bound by residues 26–30 (RQAGR), aspartate 76, tyrosine 153, serine 208, and histidine 323.

This sequence belongs to the uroporphyrinogen decarboxylase family. Homodimer.

It is found in the cytoplasm. The enzyme catalyses uroporphyrinogen III + 4 H(+) = coproporphyrinogen III + 4 CO2. It functions in the pathway porphyrin-containing compound metabolism; protoporphyrin-IX biosynthesis; coproporphyrinogen-III from 5-aminolevulinate: step 4/4. In terms of biological role, catalyzes the decarboxylation of four acetate groups of uroporphyrinogen-III to yield coproporphyrinogen-III. This is Uroporphyrinogen decarboxylase from Synechococcus sp. (strain CC9902).